A 196-amino-acid polypeptide reads, in one-letter code: Oocyte zinc finger protein XlCOF26 (196 aa).

7 consecutive C2H2-type zinc fingers follow at residues 6–28 (YSCTDCGRSFYAKGHLLNHQKNH), 34–56 (FTCTECGKIFTRKSNLRKHQRIH), 62–84 (FTCTECGKRFTEKRNLLIHQRIH), 90–112 (FTCTECGKSFNLWSTLRNHHKIH), 118–140 (FTCPECGKKFSVKNSLRKHQRTH), 146–168 (FTCTECGKTFTKKSTFHMHQSTH), and 174–196 (FTCTECGKSFAKNGNLRIHQMTH).

The protein belongs to the krueppel C2H2-type zinc-finger protein family.

It localises to the nucleus. Functionally, may be involved in transcriptional regulation. The protein is Oocyte zinc finger protein XlCOF26 of Xenopus laevis (African clawed frog).